Consider the following 320-residue polypeptide: o-succinylbenzoate synthase (320 aa).

Lys-133 serves as the catalytic Proton donor. Residues Asp-161, Glu-190, and Asp-213 each coordinate Mg(2+). Catalysis depends on Lys-235, which acts as the Proton acceptor.

This sequence belongs to the mandelate racemase/muconate lactonizing enzyme family. MenC type 1 subfamily. The cofactor is a divalent metal cation.

The catalysed reaction is (1R,6R)-6-hydroxy-2-succinyl-cyclohexa-2,4-diene-1-carboxylate = 2-succinylbenzoate + H2O. It participates in quinol/quinone metabolism; 1,4-dihydroxy-2-naphthoate biosynthesis; 1,4-dihydroxy-2-naphthoate from chorismate: step 4/7. It functions in the pathway quinol/quinone metabolism; menaquinone biosynthesis. Functionally, converts 2-succinyl-6-hydroxy-2,4-cyclohexadiene-1-carboxylate (SHCHC) to 2-succinylbenzoate (OSB). The chain is o-succinylbenzoate synthase from Escherichia coli O45:K1 (strain S88 / ExPEC).